Here is a 486-residue protein sequence, read N- to C-terminus: Cardiolipin synthase A (486 aa).

A run of 2 helical transmembrane segments spans residues 3 to 23 (IFYN…IANI) and 38 to 58 (MSWL…WFFF). 2 PLD phosphodiesterase domains span residues 219 to 246 (VDVR…VDPY) and 399 to 426 (QKGL…DMRS). Catalysis depends on residues H224, K226, D231, H404, K406, and D411.

The protein belongs to the phospholipase D family. Cardiolipin synthase subfamily. ClsA sub-subfamily.

The protein localises to the cell inner membrane. The enzyme catalyses 2 a 1,2-diacyl-sn-glycero-3-phospho-(1'-sn-glycerol) = a cardiolipin + glycerol. Functionally, catalyzes the reversible phosphatidyl group transfer from one phosphatidylglycerol molecule to another to form cardiolipin (CL) (diphosphatidylglycerol) and glycerol. This is Cardiolipin synthase A from Buchnera aphidicola subsp. Acyrthosiphon pisum (strain APS) (Acyrthosiphon pisum symbiotic bacterium).